Here is a 328-residue protein sequence, read N- to C-terminus: Sterol-4-alpha-carboxylate 3-dehydrogenase, decarboxylating (328 aa).

The active-site Proton acceptor is Y145. K149 is an NAD(+) binding site. The chain crosses the membrane as a helical span at residues 259 to 279 (LHMVLPTPIALSLVWIMALIW).

The protein belongs to the 3-beta-HSD family. Homodimer.

The protein localises to the endoplasmic reticulum membrane. It localises to the lipid droplet. It catalyses the reaction a 3beta-hydroxysteroid-4alpha-carboxylate + NADP(+) = a 3-oxosteroid + CO2 + NADPH. The enzyme catalyses a 3beta-hydroxysteroid-4alpha-carboxylate + NAD(+) = a 3-oxosteroid + CO2 + NADH. Its pathway is steroid biosynthesis; zymosterol biosynthesis; zymosterol from lanosterol: step 4/6. Catalyzes the NAD(P)(+)-dependent oxidative decarboxylation of the C4 methyl groups of 4-alpha-carboxysterols in post-squalene cholesterol biosynthesis. This chain is Sterol-4-alpha-carboxylate 3-dehydrogenase, decarboxylating (nsdhl), found in Dictyostelium discoideum (Social amoeba).